The sequence spans 210 residues: Glycerol-3-phosphate acyltransferase 2 (210 aa).

The next 6 helical transmembrane spans lie at Leu4–Tyr24, Val52–Met72, Ala73–Ile93, Ile114–Ile134, Phe141–Gln161, and Asp163–Pro183.

It belongs to the PlsY family. In terms of assembly, probably interacts with PlsX.

It localises to the cell membrane. The catalysed reaction is an acyl phosphate + sn-glycerol 3-phosphate = a 1-acyl-sn-glycero-3-phosphate + phosphate. It participates in lipid metabolism; phospholipid metabolism. Functionally, catalyzes the transfer of an acyl group from acyl-phosphate (acyl-PO(4)) to glycerol-3-phosphate (G3P) to form lysophosphatidic acid (LPA). This enzyme utilizes acyl-phosphate as fatty acyl donor, but not acyl-CoA or acyl-ACP. In Dehalococcoides mccartyi (strain CBDB1), this protein is Glycerol-3-phosphate acyltransferase 2.